A 139-amino-acid chain; its full sequence is Small ribosomal subunit protein bS6 (139 aa).

Positions 95-121 (AVTEQSEMLKAEESRNERRERRERPND) are enriched in basic and acidic residues. The tract at residues 95–139 (AVTEQSEMLKAEESRNERRERRERPNDNAEGADGDDNSDSDNADE) is disordered. A compositionally biased stretch (acidic residues) spans 124 to 139 (EGADGDDNSDSDNADE).

Belongs to the bacterial ribosomal protein bS6 family.

In terms of biological role, binds together with bS18 to 16S ribosomal RNA. The sequence is that of Small ribosomal subunit protein bS6 from Pseudomonas aeruginosa (strain LESB58).